The following is a 279-amino-acid chain: Elongation factor Ts (279 aa).

The involved in Mg(2+) ion dislocation from EF-Tu stretch occupies residues 79–82 (TDFV).

It belongs to the EF-Ts family.

Its subcellular location is the cytoplasm. Its function is as follows. Associates with the EF-Tu.GDP complex and induces the exchange of GDP to GTP. It remains bound to the aminoacyl-tRNA.EF-Tu.GTP complex up to the GTP hydrolysis stage on the ribosome. This is Elongation factor Ts from Phytoplasma mali (strain AT).